The following is a 97-amino-acid chain: Mitochondrial import inner membrane translocase subunit Tim8 A (97 aa).

The Twin CX3C motif motif lies at Cys43 to Cys66. 2 cysteine pairs are disulfide-bonded: Cys43/Cys66 and Cys47/Cys62. Residues Ser57, Ser87, Ser94, and Ser96 each carry the phosphoserine modification.

It belongs to the small Tim family. Heterohexamer; composed of 3 copies of TIMM8A and 3 copies of TIMM13, named soluble 70 kDa complex. Associates with the TIM22 complex, whose core is composed of TIMM22. In terms of tissue distribution, present at high level in liver and brain, and at lower level in muscle and heart. In CNS sections, it is predominantly present in the soma and the dendritic portion of the Purkinje cells of the cerebellum, but not in the glial cells. Scattered expression also is also detected in the brain stem, olfactory bulb, substantia nigra, hippocampus and striatum (at protein level). Ubiquitously expressed.

It localises to the mitochondrion inner membrane. Its function is as follows. Mitochondrial intermembrane chaperone that participates in the import and insertion of some multi-pass transmembrane proteins into the mitochondrial inner membrane. Also required for the transfer of beta-barrel precursors from the TOM complex to the sorting and assembly machinery (SAM complex) of the outer membrane. Acts as a chaperone-like protein that protects the hydrophobic precursors from aggregation and guide them through the mitochondrial intermembrane space. The TIMM8-TIMM13 complex mediates the import of proteins such as TIMM23, SLC25A12/ARALAR1 and SLC25A13/ARALAR2, while the predominant TIMM9-TIMM10 70 kDa complex mediates the import of much more proteins. The polypeptide is Mitochondrial import inner membrane translocase subunit Tim8 A (Timm8a1) (Mus musculus (Mouse)).